The following is a 1526-amino-acid chain: Cell wall protein IFF4 (1526 aa).

Residues 1–20 (MKFLQKFIITVALLTNIVFA) form the signal peptide. N93 and N498 each carry an N-linked (GlcNAc...) asparagine glycan. Residues 512–541 (SSAGGSSFPEETHMLQTSDSDLSSTAGSES) are disordered. Positions 525–541 (MLQTSDSDLSSTAGSES) are enriched in polar residues. A glycan (N-linked (GlcNAc...) asparagine) is linked at N637. Positions 1180 to 1207 (WNGAKSDSPHTSESDITSQYNSHSTSVA) are disordered. The span at 1193–1207 (SDITSQYNSHSTSVA) shows a compositional bias: polar residues. N1451, N1463, N1479, N1502, and N1506 each carry an N-linked (GlcNAc...) asparagine glycan. The disordered stretch occupies residues 1455–1483 (SSVSGYPTNRSDSNGYANTPTTGSNTSGD). N1502 carries GPI-anchor amidated asparagine lipidation. Positions 1503–1526 (GSTNISNKYLKFLGTVVSILILLI) are cleaved as a propeptide — removed in mature form.

The protein belongs to the HYR1/IFF family. In terms of processing, the GPI-anchor is attached to the protein in the endoplasmic reticulum and serves to target the protein to the cell surface. There, the glucosamine-inositol phospholipid moiety is cleaved off and the GPI-$modified mannoprotein is covalently attached via its lipidless GPI glycan remnant to the 1,6-beta-glucan of the outer cell wall layer.

The protein localises to the secreted. It localises to the cell wall. It is found in the membrane. GPI-anchored cell wall protein involved in cell wall organization, hyphal growth, as well as in host-fungal interaction and virulence. Plays a role in adherence to plastic and to host epithelial cells. Promotes the tissue fungal burden during murine vaginal candidiasis. Also increases susceptibility to neutrophil-mediated killing. Furthermore, contributes to the severity of hematogenously disseminated candidiasis in normal mice, but not in neutropenic mice. This is Cell wall protein IFF4 (IFF4) from Candida albicans (strain SC5314 / ATCC MYA-2876) (Yeast).